We begin with the raw amino-acid sequence, 466 residues long: Rhodanese-like domain-containing protein 4, chloroplastic (466 aa).

A chloroplast-targeting transit peptide spans 1 to 15 (MEALKTATFSPMSVL). The segment at 1-35 (MEALKTATFSPMSVLSEKRSEPRKPFSLPNLFPPK) is disordered. The transit peptide at 16–69 (SEKRSEPRKPFSLPNLFPPKSQRPISQESFLKRFNGGLALLTSVLSSATAPAKS) directs the protein to the thylakoid. A helical membrane pass occupies residues 103 to 123 (PLVIAGGVAALAVPFVLSQVL). The Rhodanese domain occupies 144-250 (TDDNAQLLDI…WLNSSLPWIE (107 aa)). The helical transmembrane segment at 277-297 (VSVALGVAAAAGLSVFAFTEI) threads the bilayer. Positions 373 to 384 (EAESATATTTTV) are enriched in low complexity. Disordered stretches follow at residues 373-392 (EAES…PEPE) and 426-466 (AQVI…PSQP). Residues 455–466 (LKPPSSPMPSQP) show a composition bias toward pro residues.

Component of high molecular weight thylakoid LFNRs-containing protein complexes containing LIR1, LFNR1, LFNR2, TIC62 and TROL proteins. Expressed in leaves and stems, and at lower levels in flowers and siliques (at protein level).

The protein resides in the plastid. The protein localises to the chloroplast envelope. Its subcellular location is the chloroplast thylakoid membrane. In terms of biological role, rhodanese domain-containing protein required for anchoring ferredoxin--NADP reductase to the thylakoid membranes and sustaining efficient linear electron flow (LEF). In Arabidopsis thaliana (Mouse-ear cress), this protein is Rhodanese-like domain-containing protein 4, chloroplastic.